The following is a 137-amino-acid chain: Ribosome-binding factor A (137 aa).

The protein belongs to the RbfA family. As to quaternary structure, monomer. Binds 30S ribosomal subunits, but not 50S ribosomal subunits or 70S ribosomes.

The protein localises to the cytoplasm. One of several proteins that assist in the late maturation steps of the functional core of the 30S ribosomal subunit. Associates with free 30S ribosomal subunits (but not with 30S subunits that are part of 70S ribosomes or polysomes). Required for efficient processing of 16S rRNA. May interact with the 5'-terminal helix region of 16S rRNA. The chain is Ribosome-binding factor A from Allorhizobium ampelinum (strain ATCC BAA-846 / DSM 112012 / S4) (Agrobacterium vitis (strain S4)).